The chain runs to 98 residues: NADH-ubiquinone oxidoreductase chain 4L (98 aa).

Transmembrane regions (helical) follow at residues 2-22, 29-49, and 61-81; these read PSIS…MLMF, SLLC…LIIL, and ILLL…LVTV.

The protein belongs to the complex I subunit 4L family. Core subunit of respiratory chain NADH dehydrogenase (Complex I) which is composed of 45 different subunits.

The protein resides in the mitochondrion inner membrane. The enzyme catalyses a ubiquinone + NADH + 5 H(+)(in) = a ubiquinol + NAD(+) + 4 H(+)(out). Its function is as follows. Core subunit of the mitochondrial membrane respiratory chain NADH dehydrogenase (Complex I) which catalyzes electron transfer from NADH through the respiratory chain, using ubiquinone as an electron acceptor. Part of the enzyme membrane arm which is embedded in the lipid bilayer and involved in proton translocation. This is NADH-ubiquinone oxidoreductase chain 4L (MT-ND4L) from Microcebus mamiratra (Claire's mouse lemur).